The sequence spans 198 residues: NAD(P)H quinone oxidoreductase PST1 (198 aa).

Positions 6 to 192 (VAIIIYSLYH…AIAKQQGEDF (187 aa)) constitute a Flavodoxin-like domain. FMN is bound by residues 12-16 (SLYHH) and 112-164 (VFVW…SPWG).

It belongs to the WrbA family. Requires FMN as cofactor.

It is found in the cell membrane. The catalysed reaction is a quinone + NADH + H(+) = a quinol + NAD(+). It carries out the reaction a quinone + NADPH + H(+) = a quinol + NADP(+). Functionally, flavodoxin-like protein (FLP) that plays a role in cell wall integrity, oxidative stress protection and virulence. FLPs act as NAD(P)H quinone oxidoreductases. Reduces ubiquinone (coenzyme Q), enabling it to serve as an antioxidant in the membrane. This chain is NAD(P)H quinone oxidoreductase PST1, found in Candida albicans (strain SC5314 / ATCC MYA-2876) (Yeast).